The chain runs to 363 residues: Fructose-bisphosphate aldolase 2 (363 aa).

Serine 61 provides a ligand contact to D-glyceraldehyde 3-phosphate. Catalysis depends on aspartate 109, which acts as the Proton donor. Residues histidine 110, aspartate 144, glutamate 174, and histidine 226 each coordinate Zn(2+). Glycine 227 provides a ligand contact to dihydroxyacetone phosphate. Residue histidine 264 coordinates Zn(2+). 265 to 267 (GGS) contacts dihydroxyacetone phosphate.

Belongs to the class II fructose-bisphosphate aldolase family. Homodimer. Zn(2+) is required as a cofactor.

It catalyses the reaction beta-D-fructose 1,6-bisphosphate = D-glyceraldehyde 3-phosphate + dihydroxyacetone phosphate. It functions in the pathway carbohydrate degradation; glycolysis; D-glyceraldehyde 3-phosphate and glycerone phosphate from D-glucose: step 4/4. Its function is as follows. Catalyzes the aldol condensation of dihydroxyacetone phosphate (DHAP or glycerone-phosphate) with glyceraldehyde 3-phosphate (G3P) to form fructose 1,6-bisphosphate (FBP) in gluconeogenesis and the reverse reaction in glycolysis. The polypeptide is Fructose-bisphosphate aldolase 2 (FBA2) (Paracoccidioides lutzii (strain ATCC MYA-826 / Pb01) (Paracoccidioides brasiliensis)).